The chain runs to 435 residues: Chromosomal replication initiator protein DnaA (435 aa).

Residues 1-70 (MNIGEKILLL…KHLFEIQNSI (70 aa)) form a domain I, interacts with DnaA modulators region. Residues 70 to 98 (IKVDVSILLKNQVESKKAEQKSVQKQQHS) are domain II. Positions 99–313 (LLNPSHTFEN…GILSKLHAYS (215 aa)) are domain III, AAA+ region. ATP contacts are provided by Gly-143, Gly-145, Lys-146, and Thr-147. Positions 314 to 435 (QLMHVDIDLQ…ELTNKITSSS (122 aa)) are domain IV, binds dsDNA.

This sequence belongs to the DnaA family. In terms of assembly, oligomerizes as a right-handed, spiral filament on DNA at oriC.

It localises to the cytoplasm. Functionally, plays an essential role in the initiation and regulation of chromosomal replication. ATP-DnaA binds to the origin of replication (oriC) to initiate formation of the DNA replication initiation complex once per cell cycle. Binds the DnaA box (a 9 base pair repeat at the origin) and separates the double-stranded (ds)DNA. Forms a right-handed helical filament on oriC DNA; dsDNA binds to the exterior of the filament while single-stranded (ss)DNA is stabiized in the filament's interior. The ATP-DnaA-oriC complex binds and stabilizes one strand of the AT-rich DNA unwinding element (DUE), permitting loading of DNA polymerase. After initiation quickly degrades to an ADP-DnaA complex that is not apt for DNA replication. Binds acidic phospholipids. This Sulfurimonas denitrificans (strain ATCC 33889 / DSM 1251) (Thiomicrospira denitrificans (strain ATCC 33889 / DSM 1251)) protein is Chromosomal replication initiator protein DnaA.